The sequence spans 344 residues: Phenylalanine--tRNA ligase alpha subunit (344 aa).

Mg(2+) is bound at residue Glu-256.

Belongs to the class-II aminoacyl-tRNA synthetase family. Phe-tRNA synthetase alpha subunit type 1 subfamily. In terms of assembly, tetramer of two alpha and two beta subunits. Mg(2+) is required as a cofactor.

The protein resides in the cytoplasm. The catalysed reaction is tRNA(Phe) + L-phenylalanine + ATP = L-phenylalanyl-tRNA(Phe) + AMP + diphosphate + H(+). This Bacillus anthracis (strain CDC 684 / NRRL 3495) protein is Phenylalanine--tRNA ligase alpha subunit.